Reading from the N-terminus, the 655-residue chain is Threonine--tRNA ligase (655 aa).

Residues 1–66 (MIDLVFPDGS…TGERKFEILT (66 aa)) enclose the TGS domain. Positions 248–540 (DHRKLGKTMD…LLENFAGALP (293 aa)) are catalytic. Residues Cys-340, His-391, and His-517 each contribute to the Zn(2+) site.

The protein belongs to the class-II aminoacyl-tRNA synthetase family. Homodimer. It depends on Zn(2+) as a cofactor.

Its subcellular location is the cytoplasm. The catalysed reaction is tRNA(Thr) + L-threonine + ATP = L-threonyl-tRNA(Thr) + AMP + diphosphate + H(+). Catalyzes the attachment of threonine to tRNA(Thr) in a two-step reaction: L-threonine is first activated by ATP to form Thr-AMP and then transferred to the acceptor end of tRNA(Thr). Also edits incorrectly charged L-seryl-tRNA(Thr). This Caulobacter vibrioides (strain ATCC 19089 / CIP 103742 / CB 15) (Caulobacter crescentus) protein is Threonine--tRNA ligase.